The following is a 693-amino-acid chain: Elongation factor G (693 aa).

The 275-residue stretch at 8-282 folds into the tr-type G domain; the sequence is KNTRNIGIMA…AAIEYLPSPL (275 aa). Residues 17–24, 81–85, and 135–138 each bind GTP; these read AHIDAGKT, DTPGH, and NKMD.

The protein belongs to the TRAFAC class translation factor GTPase superfamily. Classic translation factor GTPase family. EF-G/EF-2 subfamily.

The protein resides in the cytoplasm. Catalyzes the GTP-dependent ribosomal translocation step during translation elongation. During this step, the ribosome changes from the pre-translocational (PRE) to the post-translocational (POST) state as the newly formed A-site-bound peptidyl-tRNA and P-site-bound deacylated tRNA move to the P and E sites, respectively. Catalyzes the coordinated movement of the two tRNA molecules, the mRNA and conformational changes in the ribosome. This Macrococcus caseolyticus (strain JCSC5402) (Macrococcoides caseolyticum) protein is Elongation factor G.